A 451-amino-acid chain; its full sequence is Molybdate-anion transporter (451 aa).

A run of 12 helical transmembrane segments spans residues 1–21 (MLVT…VLEF), 45–65 (YDFY…GPYL), 79–99 (IAII…VSVP), 130–150 (FVLM…FSCF), 180–200 (NGGI…WLGL), 201–221 (GPAS…VLVI), 251–271 (VLLL…FIFL), 281–301 (APLG…SSLY), 316–336 (VLCL…FSTA), 346–366 (LLAF…MRFL), 378–398 (GVLN…LLVL), and 410–430 (MFSL…SLFT).

Belongs to the major facilitator superfamily.

It is found in the cell membrane. Its function is as follows. Mediates high-affinity intracellular uptake of the rare oligo-element molybdenum. This chain is Molybdate-anion transporter (mfsd5), found in Xenopus laevis (African clawed frog).